We begin with the raw amino-acid sequence, 579 residues long: SLAIN motif-containing protein 1 (579 aa).

6 disordered regions span residues 1–21, 60–95, 135–162, 233–258, 289–313, and 347–454; these read MMAEQVKCASPVAASGAGPGP, LLLQPPPPSAPPPAGACSPLATHRAPASTTSPGPGA, GGGGSPEPGTAGTPPGEAATPPLPPPTL, YTSRGSPLSPQSSIDSELSTSELEDD, STSASVSRNSSSVSLSSGKKGTCSD, and IPHS…PGQI. Low complexity predominate over residues 9-21; sequence ASPVAASGAGPGP. The stretch at 21 to 56 forms a coiled coil; sequence PVVNAELEVKKLQELVRKLEKQNEQLRSRAASAAAA. The span at 63-73 shows a compositional bias: pro residues; that stretch reads QPPPPSAPPPA. The span at 141–154 shows a compositional bias: low complexity; the sequence is EPGTAGTPPGEAAT. Residues 233–243 show a composition bias toward polar residues; that stretch reads YTSRGSPLSPQ. The residue at position 241 (serine 241) is a Phosphoserine. Composition is skewed to low complexity over residues 244 to 253 and 289 to 305; these read SSIDSELSTS and STSASVSRNSSSVSLSS. Residues 362–373 are compositionally biased toward polar residues; the sequence is SPSTQYFPSNNF. Residues 374-390 are compositionally biased toward low complexity; it reads QQPQYYPPQAQTADQQP. Over residues 412 to 432 the composition is skewed to polar residues; the sequence is AAASSNLSSPVTVRSSQSFDS. At arginine 469 the chain carries Asymmetric dimethylarginine. The tract at residues 479-516 is disordered; the sequence is SPTVQGSSSSGSSGSSGGSGSGMPLSNGTQLYSTTGIP. Over residues 502–516 the composition is skewed to polar residues; it reads PLSNGTQLYSTTGIP. Arginine 554 carries the asymmetric dimethylarginine modification.

This sequence belongs to the SLAIN motif-containing family. In terms of assembly, interacts with MAPRE1, MAPRE2, MAPRE3 and CKAP5. Interacts with ZDHHC17 (via ANK repeats). As to expression, expressed in embryonic stem cells. Expressed in adult bone marrow, brain, kidney, lung, testis and thymus. Expressed in colon. Isoform 1 is highly expressed in brain. Isoform 2 is more widely expressed in bone marrow, brain, colon, kidney, lung and thymus.

It localises to the cytoplasm. The protein resides in the cytoskeleton. In terms of biological role, microtubule plus-end tracking protein that might be involved in the regulation of cytoplasmic microtubule dynamics, microtubule organization and microtubule elongation. The sequence is that of SLAIN motif-containing protein 1 (Slain1) from Mus musculus (Mouse).